Here is a 208-residue protein sequence, read N- to C-terminus: Cytochrome c biogenesis ATP-binding export protein CcmA (208 aa).

Residues 2-206 (LEAKELTCAR…IRLTAEGRDE (205 aa)) form the ABC transporter domain. 34–41 (GPNGAGKT) is an ATP binding site.

Belongs to the ABC transporter superfamily. CcmA exporter (TC 3.A.1.107) family. The complex is composed of two ATP-binding proteins (CcmA) and two transmembrane proteins (CcmB).

Its subcellular location is the cell inner membrane. It catalyses the reaction heme b(in) + ATP + H2O = heme b(out) + ADP + phosphate + H(+). Functionally, part of the ABC transporter complex CcmAB involved in the biogenesis of c-type cytochromes; once thought to export heme, this seems not to be the case, but its exact role is uncertain. Responsible for energy coupling to the transport system. The polypeptide is Cytochrome c biogenesis ATP-binding export protein CcmA (Tatumella citrea (Pantoea citrea)).